The sequence spans 321 residues: Acetyl-coenzyme A carboxylase carboxyl transferase subunit alpha (321 aa).

One can recognise a CoA carboxyltransferase C-terminal domain in the interval 32–293 (DISEEIARLQ…KRVLQDQLKE (262 aa)).

Belongs to the AccA family. Acetyl-CoA carboxylase is a heterohexamer composed of biotin carboxyl carrier protein (AccB), biotin carboxylase (AccC) and two subunits each of ACCase subunit alpha (AccA) and ACCase subunit beta (AccD).

The protein resides in the cytoplasm. The catalysed reaction is N(6)-carboxybiotinyl-L-lysyl-[protein] + acetyl-CoA = N(6)-biotinyl-L-lysyl-[protein] + malonyl-CoA. Its pathway is lipid metabolism; malonyl-CoA biosynthesis; malonyl-CoA from acetyl-CoA: step 1/1. In terms of biological role, component of the acetyl coenzyme A carboxylase (ACC) complex. First, biotin carboxylase catalyzes the carboxylation of biotin on its carrier protein (BCCP) and then the CO(2) group is transferred by the carboxyltransferase to acetyl-CoA to form malonyl-CoA. The protein is Acetyl-coenzyme A carboxylase carboxyl transferase subunit alpha of Chromobacterium violaceum (strain ATCC 12472 / DSM 30191 / JCM 1249 / CCUG 213 / NBRC 12614 / NCIMB 9131 / NCTC 9757 / MK).